Consider the following 752-residue polypeptide: Endo-1,4-beta-xylanase 3 (752 aa).

Residues 1–22 (MEKNTNTNHTSDDNNDKNHTNE) form a disordered region. Over residues 10 to 22 (TSDDNNDKNHTNE) the composition is skewed to basic and acidic residues. 2 CBM-cenC domains span residues 26–163 (KIIL…EGPP) and 197–344 (NIVE…VQGP). The GH10 domain occupies 397–692 (FPYIVKVKQT…NEAGKRFLEV (296 aa)). Glutamate 526 functions as the Proton donor in the catalytic mechanism. The active-site Nucleophile is glutamate 627.

Belongs to the glycosyl hydrolase 10 (cellulase F) family. As to expression, confined to immature xylems.

The enzyme catalyses Endohydrolysis of (1-&gt;4)-beta-D-xylosidic linkages in xylans.. The protein operates within glycan degradation; xylan degradation. In terms of biological role, binds to and hydrolyzes insoluble and soluble xylan substrates. In Arabidopsis thaliana (Mouse-ear cress), this protein is Endo-1,4-beta-xylanase 3.